The following is a 967-amino-acid chain: Leucine--tRNA ligase (967 aa).

The 'HIGH' region motif lies at 43–53; the sequence is PYLSGHLHVGH. Residues 650 to 654 carry the 'KMSKS' region motif; sequence KMSKS. K653 contacts ATP.

The protein belongs to the class-I aminoacyl-tRNA synthetase family.

Its subcellular location is the cytoplasm. The catalysed reaction is tRNA(Leu) + L-leucine + ATP = L-leucyl-tRNA(Leu) + AMP + diphosphate. This is Leucine--tRNA ligase from Thermococcus kodakarensis (strain ATCC BAA-918 / JCM 12380 / KOD1) (Pyrococcus kodakaraensis (strain KOD1)).